A 587-amino-acid chain; its full sequence is 2-succinyl-5-enolpyruvyl-6-hydroxy-3-cyclohexene-1-carboxylate synthase (587 aa).

This sequence belongs to the TPP enzyme family. MenD subfamily. Homodimer. The cofactor is Mg(2+). Requires Mn(2+) as cofactor. It depends on thiamine diphosphate as a cofactor.

The enzyme catalyses isochorismate + 2-oxoglutarate + H(+) = 5-enolpyruvoyl-6-hydroxy-2-succinyl-cyclohex-3-ene-1-carboxylate + CO2. The protein operates within quinol/quinone metabolism; 1,4-dihydroxy-2-naphthoate biosynthesis; 1,4-dihydroxy-2-naphthoate from chorismate: step 2/7. It participates in cofactor biosynthesis; phylloquinone biosynthesis. Functionally, catalyzes the thiamine diphosphate-dependent decarboxylation of 2-oxoglutarate and the subsequent addition of the resulting succinic semialdehyde-thiamine pyrophosphate anion to isochorismate to yield 2-succinyl-5-enolpyruvyl-6-hydroxy-3-cyclohexene-1-carboxylate (SEPHCHC). This is 2-succinyl-5-enolpyruvyl-6-hydroxy-3-cyclohexene-1-carboxylate synthase from Prochlorococcus marinus (strain AS9601).